A 428-amino-acid polypeptide reads, in one-letter code: Enolase (428 aa).

Glutamine 167 is a (2R)-2-phosphoglycerate binding site. Glutamate 209 (proton donor) is an active-site residue. Residues aspartate 246, glutamate 289, and aspartate 316 each coordinate Mg(2+). The (2R)-2-phosphoglycerate site is built by lysine 341, arginine 370, serine 371, and lysine 392. Lysine 341 (proton acceptor) is an active-site residue.

This sequence belongs to the enolase family. Component of the RNA degradosome, a multiprotein complex involved in RNA processing and mRNA degradation. Mg(2+) is required as a cofactor.

Its subcellular location is the cytoplasm. It is found in the secreted. It localises to the cell surface. It catalyses the reaction (2R)-2-phosphoglycerate = phosphoenolpyruvate + H2O. It participates in carbohydrate degradation; glycolysis; pyruvate from D-glyceraldehyde 3-phosphate: step 4/5. Catalyzes the reversible conversion of 2-phosphoglycerate (2-PG) into phosphoenolpyruvate (PEP). It is essential for the degradation of carbohydrates via glycolysis. In Saccharophagus degradans (strain 2-40 / ATCC 43961 / DSM 17024), this protein is Enolase.